Here is a 165-residue protein sequence, read N- to C-terminus: 6,7-dimethyl-8-ribityllumazine synthase (165 aa).

Residues Tyr30, 61–63 (ALE), and 90–92 (VVI) contribute to the 5-amino-6-(D-ribitylamino)uracil site. 95 to 96 (ET) serves as a coordination point for (2S)-2-hydroxy-3-oxobutyl phosphate. Catalysis depends on His98, which acts as the Proton donor. Asn123 contributes to the 5-amino-6-(D-ribitylamino)uracil binding site. (2S)-2-hydroxy-3-oxobutyl phosphate is bound at residue Arg137.

This sequence belongs to the DMRL synthase family.

It carries out the reaction (2S)-2-hydroxy-3-oxobutyl phosphate + 5-amino-6-(D-ribitylamino)uracil = 6,7-dimethyl-8-(1-D-ribityl)lumazine + phosphate + 2 H2O + H(+). It functions in the pathway cofactor biosynthesis; riboflavin biosynthesis; riboflavin from 2-hydroxy-3-oxobutyl phosphate and 5-amino-6-(D-ribitylamino)uracil: step 1/2. Catalyzes the formation of 6,7-dimethyl-8-ribityllumazine by condensation of 5-amino-6-(D-ribitylamino)uracil with 3,4-dihydroxy-2-butanone 4-phosphate. This is the penultimate step in the biosynthesis of riboflavin. The polypeptide is 6,7-dimethyl-8-ribityllumazine synthase (Xanthobacter autotrophicus (strain ATCC BAA-1158 / Py2)).